Here is a 228-residue protein sequence, read N- to C-terminus: Interferon-induced transmembrane protein 10 (228 aa).

At 1-154 (MREGKRGPPC…PDTTEVNDYY (154 aa)) the chain is on the extracellular side. The segment at 29–49 (AQGPGQCPAPLGDPASTTDGA) is disordered. Residues 155-175 (LWSIFNFVYLNFCCLGFIALA) traverse the membrane as a helical segment. 2 S-palmitoyl cysteine lipidation sites follow: Cys167 and Cys168. Residues 176–200 (YSLKVRDKKLLNDLNGAVEDAKTAR) are Cytoplasmic-facing. Residues 201-221 (LFNITSSALAASCIILVFIFL) form a helical membrane-spanning segment. Residues 222-228 (RYPLTDY) are Extracellular-facing.

It belongs to the CD225/Dispanin family.

The protein resides in the cell membrane. This is Interferon-induced transmembrane protein 10 (IFITM10) from Homo sapiens (Human).